Consider the following 207-residue polypeptide: Protein GrpE (207 aa).

Basic and acidic residues predominate over residues 1-11 (MTETDGQKDNN). The interval 1-39 (MTETDGQKDNNQDTAQAAADPVVSKPYIMPDDPEEGSNE) is disordered.

Belongs to the GrpE family. Homodimer.

The protein resides in the cytoplasm. Participates actively in the response to hyperosmotic and heat shock by preventing the aggregation of stress-denatured proteins, in association with DnaK and GrpE. It is the nucleotide exchange factor for DnaK and may function as a thermosensor. Unfolded proteins bind initially to DnaJ; upon interaction with the DnaJ-bound protein, DnaK hydrolyzes its bound ATP, resulting in the formation of a stable complex. GrpE releases ADP from DnaK; ATP binding to DnaK triggers the release of the substrate protein, thus completing the reaction cycle. Several rounds of ATP-dependent interactions between DnaJ, DnaK and GrpE are required for fully efficient folding. This is Protein GrpE from Rhodopseudomonas palustris (strain TIE-1).